The chain runs to 1048 residues: Transcription factor mef2A (1048 aa).

Residues M1–D61 form the MADS-box domain. Residues D74–Y85 show a composition bias toward polar residues. Disordered regions lie at residues D74–Q263, Q294–Q339, G386–T812, and L916–N1048. Acidic residues predominate over residues D97–G110. Low complexity-rich tracts occupy residues N130–H205, G212–Q263, Q294–N303, Q327–Q339, P393–K437, Y446–G466, and Q481–P500. Positions N249 to M304 form a coiled coil. A compositionally biased stretch (polar residues) spans Y506–H522. Positions H529 to Q539 are enriched in basic residues. A compositionally biased stretch (low complexity) spans Q540–Q593. Polar residues predominate over residues N600–M618. Residues N619–N699 show a composition bias toward low complexity. Over residues S715–V736 the composition is skewed to polar residues. Low complexity-rich tracts occupy residues N738–T802, S924–S960, and N982–N1029.

The protein resides in the nucleus. Functionally, transcription factor that regulates cell differentiation during development. Seems to negatively regulate prestalk gene expression and positively regulate prespore gene expression. In Dictyostelium discoideum (Social amoeba), this protein is Transcription factor mef2A (mef2A).